The following is a 588-amino-acid chain: Serine/threonine-protein phosphatase 2A 65 kDa regulatory subunit A alpha isoform (588 aa).

HEAT repeat units lie at residues 2-42 (AMVD…ALGE), 44-80 (RTRK…FVGG), 81-119 (IEFA…QMKE), 158-196 (DVLK…TVES), 197-235 (TFLI…LLEP), 236-274 (QDCV…AVGP), 275-313 (DCTR…LLNP), 315-352 (LAIQ…ILGK), 353-391 (DSTI…VIGI), 393-430 (LLSQ…QLGI), 432-469 (FFDD…EFGP), 470-508 (EWAM…VMGS), 509-547 (EITC…IVDQ), and 549-586 (VVDK…STAA).

It belongs to the phosphatase 2A regulatory subunit A family. In terms of assembly, PP2A consists of a common heterodimeric core enzyme, composed of a 36 kDa catalytic subunit (subunit C) and a 65 kDa constant regulatory subunit (subunit A), that associates with a variety of regulatory subunits such as subunits B (the R2/B/PR55/B55, R3/B''/PR72/PR130/PR59 and R5/B'/B56 families) and the regulatory subunits TON2. Interacts with CYP20-1/ROC7. Also interacts with phosphatidic acid (PA), a lipid signaling molecule. Interacts with CHIP. Interacts with SIC/RON3. In terms of processing, ubiquitinated. CHIP-mediated ubiquitination enhances phosphatase activity after an abiotic stress such as low temperature or darkness. Mostly expressed in cell-dividing tissues such as apical meristems. Ubiquitous, with higher levels in roots and flowers (at protein level).

Its subcellular location is the cytoplasm. The protein localises to the cytosol. The protein resides in the nucleus. Its function is as follows. The A subunit of protein phosphatase 2A serves as a scaffolding molecule to coordinate the assembly of the catalytic subunit and a variable regulatory B subunit. Seems to act as a positive regulator of PP2A catalytic activity. Confers resistance to phosphatase inhibitors such as okadaic acid and cantharidin. Involved during developmental process such as seedling and floral developments, root gravitropism, and stomatal opening regulation. Involved in the regulation of auxin efflux, especially during basipetal (tips to base) auxin transport in roots, and appears to contribute to the perception of auxin efflux inhibitors such as 1-N-naphthylphthalamic acid (NPA) and to semicarbazone I (substituted phenylsemicarbazone of 2-acetylarylcarboxylic acids) (SCB-I). Modulates the magnitude of ethylene response in the hypocotyl and stem, and functions as a general positive transducer of early ABA signaling. The holoenzyme composed of PP2AA1, PP2A4 and B'ZETA or B'ETA acts as a negative regulator of plant innate immunity by controlling BAK1 phosphorylation state and activation in surface-localized immune receptor complexes. The chain is Serine/threonine-protein phosphatase 2A 65 kDa regulatory subunit A alpha isoform (PP2AA1) from Arabidopsis thaliana (Mouse-ear cress).